Reading from the N-terminus, the 600-residue chain is ATP-dependent RNA helicase DDX55 (600 aa).

The short motif at 9-37 (WESLQVPLHPRVLGALRELGFPHMTPVQS) is the Q motif element. Residues 40 to 223 (IPLFMKNKDV…RAGLRNPVRI (184 aa)) form the Helicase ATP-binding domain. 53 to 60 (AVTGSGKT) contributes to the ATP binding site. The DEAD box signature appears at 171–174 (DEAD). The 149-residue stretch at 254 to 402 (KFNQLVHFLR…EMSLQRNTID (149 aa)) folds into the Helicase C-terminal domain. Residues 499 to 513 (LEQKRKERSENEGRK) show a composition bias toward basic and acidic residues. The tract at residues 499 to 551 (LEQKRKERSENEGRKKFIKNKAWSKQKAKKERKKKMNAKRKKDEGSDIDDEDM) is disordered. Basic residues predominate over residues 514-538 (KFIKNKAWSKQKAKKERKKKMNAKR). The interval 533-562 (KMNAKRKKDEGSDIDDEDMEELLNDTRLLK) is important for nuclear localization. Ser544 and Ser594 each carry phosphoserine.

The protein belongs to the DEAD box helicase family. DDX55/SPB4 subfamily. As to quaternary structure, interacts with 28S rRNA. Interacts with double-stranded RNA substrates in vitro; the interaction stimulates ATPase activity.

It is found in the nucleus. The protein resides in the nucleoplasm. It carries out the reaction ATP + H2O = ADP + phosphate + H(+). In terms of biological role, probable ATP-binding RNA helicase. Has ATPase activity and is involved in the maturation of precursor large subunit rRNAs. The sequence is that of ATP-dependent RNA helicase DDX55 (Ddx55) from Mus musculus (Mouse).